We begin with the raw amino-acid sequence, 284 residues long: MTDRRRINGPAGATIPPVYEDSGISEVKALKIRSRPSNIIRKIYLKTGVTPSASGSAYLELETSANSGVSGLKLSCTVHGPRSLPRSSPFSPHMVVSTHVKYAPFATKQRRGYLRDPTERDLGIHLEAALRGAIIADRWPKSGVDIIISIIEGDQDREASKTQGDEVWDMMNTLSGCITVASAALADAGIDCVDTVAGGVAALVQDSDGSPEIVVDPIPSEHRKILAACCVAYLPMRDEVTNLWFRGDLPASDMDLYTELVEKGIQASRSANRVLVDCLTETVG.

The protein belongs to the RNase PH family. As to quaternary structure, component of the RNA exosome complex.

It is found in the cytoplasm. Its subcellular location is the nucleus. The protein localises to the nucleolus. Non-catalytic component of the RNA exosome complex which has 3'-&gt;5' exoribonuclease activity and participates in a multitude of cellular RNA processing and degradation events. This chain is Exosome complex component MTR3 (MTR3), found in Chaetomium thermophilum (strain DSM 1495 / CBS 144.50 / IMI 039719) (Thermochaetoides thermophila).